Consider the following 193-residue polypeptide: V-type ATP synthase subunit E (193 aa).

It belongs to the V-ATPase E subunit family.

In terms of biological role, produces ATP from ADP in the presence of a proton gradient across the membrane. This is V-type ATP synthase subunit E from Anaeromyxobacter sp. (strain Fw109-5).